The following is a 200-amino-acid chain: 3-isopropylmalate dehydratase small subunit (200 aa).

This sequence belongs to the LeuD family. LeuD type 1 subfamily. Heterodimer of LeuC and LeuD.

The enzyme catalyses (2R,3S)-3-isopropylmalate = (2S)-2-isopropylmalate. Its pathway is amino-acid biosynthesis; L-leucine biosynthesis; L-leucine from 3-methyl-2-oxobutanoate: step 2/4. In terms of biological role, catalyzes the isomerization between 2-isopropylmalate and 3-isopropylmalate, via the formation of 2-isopropylmaleate. This is 3-isopropylmalate dehydratase small subunit from Actinobacillus succinogenes (strain ATCC 55618 / DSM 22257 / CCUG 43843 / 130Z).